We begin with the raw amino-acid sequence, 212 residues long: Large ribosomal subunit protein uL1 (212 aa).

It belongs to the universal ribosomal protein uL1 family. Part of the 50S ribosomal subunit.

Its function is as follows. Binds directly to 23S rRNA. Probably involved in E site tRNA release. Protein L1 is also a translational repressor protein, it controls the translation of its operon by binding to its mRNA. The polypeptide is Large ribosomal subunit protein uL1 (Haloarcula marismortui (strain ATCC 43049 / DSM 3752 / JCM 8966 / VKM B-1809) (Halobacterium marismortui)).